A 704-amino-acid polypeptide reads, in one-letter code: Elongation factor G 1 (704 aa).

The tr-type G domain maps to 8–285 (EKIRNIGISA…AVCAFLPNPK (278 aa)). Residues 17-24 (AHIDSGKT), 84-88 (DTPGH), and 138-141 (NKMD) contribute to the GTP site.

The protein belongs to the TRAFAC class translation factor GTPase superfamily. Classic translation factor GTPase family. EF-G/EF-2 subfamily.

It localises to the cytoplasm. In terms of biological role, catalyzes the GTP-dependent ribosomal translocation step during translation elongation. During this step, the ribosome changes from the pre-translocational (PRE) to the post-translocational (POST) state as the newly formed A-site-bound peptidyl-tRNA and P-site-bound deacylated tRNA move to the P and E sites, respectively. Catalyzes the coordinated movement of the two tRNA molecules, the mRNA and conformational changes in the ribosome. The polypeptide is Elongation factor G 1 (Myxococcus xanthus (strain DK1622)).